An 82-amino-acid chain; its full sequence is Pigment-dispersing hormone peptides (82 aa).

The first 26 residues, Met1–Ser26, serve as a signal peptide directing secretion. Ala80 is modified (alanine amide).

Belongs to the arthropod PDH family. In terms of tissue distribution, expressed strongly in the head and weakly in the ventral nerve cord. Not detected in the midgut cecum or hindgut. In the cephalic neural complex, specifically localized to cells within the optic lobe, anteromedian protocerebrum, accessory lobe, tritocerebrum, and subesophageal ganglion.

Its subcellular location is the secreted. Functionally, the pigment-dispersing hormone causes the migration of the distal retinal pigment into the proximal end of the pigment chromatophore cells and thus decreases the amount of light entering the retinulas. May also function as a neurotransmitter and/or neuromodulator. This Armadillidium vulgare (Pillbug) protein is Pigment-dispersing hormone peptides.